A 471-amino-acid polypeptide reads, in one-letter code: Adenosylhomocysteinase (471 aa).

Thr60, Asp135, and Glu196 together coordinate substrate. Residue 197-199 (TTT) coordinates NAD(+). Lys226 and Asp230 together coordinate substrate. NAD(+) contacts are provided by residues Asn231, 260 to 265 (GYGDVG), Glu283, Asn318, 339 to 341 (IGH), and Asn387.

It belongs to the adenosylhomocysteinase family. NAD(+) is required as a cofactor.

The protein localises to the cytoplasm. It carries out the reaction S-adenosyl-L-homocysteine + H2O = L-homocysteine + adenosine. It participates in amino-acid biosynthesis; L-homocysteine biosynthesis; L-homocysteine from S-adenosyl-L-homocysteine: step 1/1. Its function is as follows. May play a key role in the regulation of the intracellular concentration of adenosylhomocysteine. The polypeptide is Adenosylhomocysteinase (Chlorobium phaeovibrioides (strain DSM 265 / 1930) (Prosthecochloris vibrioformis (strain DSM 265))).